Here is a 542-residue protein sequence, read N- to C-terminus: MSILALVEDRPTPKEVYNWKIYLLAAVASFTSCMIGYDSAFIGTTLALSSFREEFGFSTMSKTAVNLVSANIVSCYQAGAFFGAFFAYPIGHFWGRKWGLLFAGTIFTLGAGLMLGANGDRGLGLLYGGRVLAGLGVGAGSNITPIYISEMAPPSIRGRLVGVYELGWQIGGLVGFWINYGVSETLAPSHKQWIIPFAVQLIPSGLLLIGAVFLKESPRWLFSRGRREDAIKNLCWIRQLPADHIYMIEEIGAVDQALEEQRTTIGLGFWKPFKAAGTNKKVMYRLFLGSMLFFWQNGSGINAINYYSPTVFKSIGLHGANTSMFSTGIFGVVKTVVTFVWLLYLIDRVGRRLLLLIGAAGAAVCLLIVGAYIKIADPASNPTQEMTGGGIAAMFFFYLYTVFYTPSWNGTPWVMNSEMFEPNMRSLAQACAAASNWLWNFLISRFTPQMFAKMEYGVWFFFASLMLLSIVFVFFLVPETKGIPLESMDVLFESKPIWRAHATVLAKLREDEEQFRHDIEESGYSKTGEQQVEHVSEDLPKV.

The Cytoplasmic portion of the chain corresponds to 1–22; that stretch reads MSILALVEDRPTPKEVYNWKIY. A helical transmembrane segment spans residues 23 to 43; that stretch reads LLAAVASFTSCMIGYDSAFIG. The Extracellular portion of the chain corresponds to 44-74; it reads TTLALSSFREEFGFSTMSKTAVNLVSANIVS. Residues 75–95 form a helical membrane-spanning segment; the sequence is CYQAGAFFGAFFAYPIGHFWG. Residues 96–97 are Cytoplasmic-facing; that stretch reads RK. Residues 98–118 form a helical membrane-spanning segment; sequence WGLLFAGTIFTLGAGLMLGAN. The Extracellular portion of the chain corresponds to 119–130; it reads GDRGLGLLYGGR. Residues 131–151 traverse the membrane as a helical segment; that stretch reads VLAGLGVGAGSNITPIYISEM. Topologically, residues 152–159 are cytoplasmic; that stretch reads APPSIRGR. Residues 160-180 traverse the membrane as a helical segment; sequence LVGVYELGWQIGGLVGFWINY. Topologically, residues 181-193 are extracellular; that stretch reads GVSETLAPSHKQW. A helical membrane pass occupies residues 194-214; it reads IIPFAVQLIPSGLLLIGAVFL. Residues 215–285 lie on the Cytoplasmic side of the membrane; the sequence is KESPRWLFSR…AGTNKKVMYR (71 aa). Residues 286 to 306 form a helical membrane-spanning segment; it reads LFLGSMLFFWQNGSGINAINY. At 307–325 the chain is on the extracellular side; sequence YSPTVFKSIGLHGANTSMF. A helical transmembrane segment spans residues 326–346; that stretch reads STGIFGVVKTVVTFVWLLYLI. Topologically, residues 347-352 are cytoplasmic; sequence DRVGRR. Residues 353–373 form a helical membrane-spanning segment; that stretch reads LLLLIGAAGAAVCLLIVGAYI. Topologically, residues 374 to 387 are extracellular; sequence KIADPASNPTQEMT. A helical transmembrane segment spans residues 388–408; sequence GGGIAAMFFFYLYTVFYTPSW. The Cytoplasmic portion of the chain corresponds to 409–456; it reads NGTPWVMNSEMFEPNMRSLAQACAAASNWLWNFLISRFTPQMFAKMEY. Residues 457 to 477 traverse the membrane as a helical segment; the sequence is GVWFFFASLMLLSIVFVFFLV. Over 478-542 the chain is Extracellular; sequence PETKGIPLES…EHVSEDLPKV (65 aa). Residues 523–542 form a disordered region; that stretch reads GYSKTGEQQVEHVSEDLPKV. A compositionally biased stretch (basic and acidic residues) spans 531–542; that stretch reads QVEHVSEDLPKV.

This sequence belongs to the major facilitator superfamily. Sugar transporter (TC 2.A.1.1) family. Interacts with creB. In terms of processing, ubiquitinated. Deubiquitinated by creB, probably to control its activity or amount.

Its subcellular location is the cell membrane. Functionally, integral membrane transporter that imports quinic acid to be catabolized as a carbon source. The polypeptide is Probable quinate permease (qutD) (Aspergillus fumigatus (strain ATCC MYA-4609 / CBS 101355 / FGSC A1100 / Af293) (Neosartorya fumigata)).